A 1599-amino-acid chain; its full sequence is Protein TOPAZ1 (1599 aa).

Disordered regions lie at residues 1–42 (MVAQ…KESL), 159–185 (GCMHVPENSSKSKKENPRSLIDKTDPS), 802–836 (PNVAEEHQSADSKHMELPEKKEPSDHLRELPVPDP), and 867–889 (VTHETSSNEKPGGLSEQTKSSDL). Basic and acidic residues-rich tracts occupy residues 168–183 (SKSKKENPRSLIDKTD) and 805–832 (AEEHQSADSKHMELPEKKEPSDHLRELP). Residues 874-884 (NEKPGGLSEQT) are compositionally biased toward polar residues.

Expressed in both adult testis and fetal ovary, mostly in germ cells (at protein level).

It is found in the cytoplasm. It localises to the cytosol. Its function is as follows. Important for normal spermatogenesis and male fertility. Specifically required for progression to the post-meiotic stages of spermatocyte development. Seems to be necessary for normal expression levels of a number of testis-expressed gene transcripts, although its role in this process is unclear. In Ovis aries (Sheep), this protein is Protein TOPAZ1 (TOPAZ1).